The following is a 115-amino-acid chain: Peptidyl-tRNA hydrolase (115 aa).

This sequence belongs to the PTH2 family.

Its subcellular location is the cytoplasm. The catalysed reaction is an N-acyl-L-alpha-aminoacyl-tRNA + H2O = an N-acyl-L-amino acid + a tRNA + H(+). In terms of biological role, the natural substrate for this enzyme may be peptidyl-tRNAs which drop off the ribosome during protein synthesis. The protein is Peptidyl-tRNA hydrolase of Methanocaldococcus jannaschii (strain ATCC 43067 / DSM 2661 / JAL-1 / JCM 10045 / NBRC 100440) (Methanococcus jannaschii).